The chain runs to 233 residues: Large ribosomal subunit protein uL1 (233 aa).

This sequence belongs to the universal ribosomal protein uL1 family. In terms of assembly, part of the 50S ribosomal subunit.

In terms of biological role, binds directly to 23S rRNA. The L1 stalk is quite mobile in the ribosome, and is involved in E site tRNA release. Functionally, protein L1 is also a translational repressor protein, it controls the translation of the L11 operon by binding to its mRNA. The protein is Large ribosomal subunit protein uL1 of Shewanella sediminis (strain HAW-EB3).